The chain runs to 143 residues: Photosystem I reaction center subunit IV B, chloroplastic (143 aa).

A chloroplast-targeting transit peptide spans 1–51 (MASSSMASAASGFMVATPNIATSNTAPRTSMLFFSSSKNNTTTNFPRLVVR). Residues 56-75 (AAPPAATATAEGEAPPAKAA) are compositionally biased toward low complexity. The segment at 56–86 (AAPPAATATAEGEAPPAKAAKPPPIGPKRGT) is disordered.

It belongs to the PsaE family. Post-translationally, 2 isoforms exists (ratio 1:1). With or without the N-terminal alanine.

Its subcellular location is the plastid. It is found in the chloroplast thylakoid membrane. Its function is as follows. Stabilizes the interaction between PsaC and the PSI core, assists the docking of the ferredoxin to PSI and interacts with ferredoxin-NADP oxidoreductase. This is Photosystem I reaction center subunit IV B, chloroplastic (PSAEB) from Nicotiana sylvestris (Wood tobacco).